The chain runs to 442 residues: D(2) dopamine receptor A (442 aa).

Residues 1-31 (MDPQNLSMYNDDINNGTNGTAVDQKPHYNYY) are Extracellular-facing. N-linked (GlcNAc...) asparagine glycans are attached at residues N5, N15, and N18. A helical transmembrane segment spans residues 32–54 (AMLLTLLVFVIVFGNVLVCIAVS). Over 55–64 (REKALQTTTN) the chain is Cytoplasmic. A helical membrane pass occupies residues 65–87 (YLIVSLAVADLLVATLVMPWAVY). Over 88–102 (MEVVGEWRFSRIHCD) the chain is Extracellular. Residues C101 and C176 are joined by a disulfide bond. The chain crosses the membrane as a helical span at residues 103–124 (IFVTLDVMMCTASILNLCAISI). Residues 125-145 (DRYTAVAMPMLYNTRYSSKRR) lie on the Cytoplasmic side of the membrane. Residues 146–166 (VTVMISVVWVLSFAISCPLLF) traverse the membrane as a helical segment. Topologically, residues 167 to 182 (GLNNTGSKVCIIDNPA) are extracellular. The chain crosses the membrane as a helical span at residues 183–207 (FVIYSSIVSFYVPFIVTLLVYVQIY). Over 208–372 (IVLRKRRKRV…SQHKEKKATQ (165 aa)) the chain is Cytoplasmic. A disordered region spans residues 273–335 (DMEMEMMSST…KNGHPKDSTK (63 aa)). Residues 304-318 (ATSNQCKNASLTSPV) are compositionally biased toward polar residues. A compositionally biased stretch (basic and acidic residues) spans 322–335 (YKAEKNGHPKDSTK). Residues 373 to 394 (MLAIVLGVFIICWLPFFIIHIL) form a helical membrane-spanning segment. The Extracellular segment spans residues 395-408 (NMHCNCNIPQALYS). Residues C398 and C400 are joined by a disulfide bond. A helical membrane pass occupies residues 409-430 (AFTWLGYVNSAVNPIIYTTFNV). Topologically, residues 431 to 442 (EFRKAFIKILHC) are cytoplasmic. C442 carries S-palmitoyl cysteine lipidation.

It belongs to the G-protein coupled receptor 1 family. Palmitoylated. Palmitoylation is probably required for proper localization to the plasma membrane and stability of the receptor. Brain; pituitary.

It localises to the cell membrane. The protein resides in the golgi apparatus membrane. This is one of the five types (D1 to D5) of receptors for dopamine. The activity of this receptor is mediated by G proteins which inhibits adenylyl cyclase. In Xenopus D2R is involved in the regulation of the melanotrope cells of the intermediate pituitary during background adaptation of the animal. The protein is D(2) dopamine receptor A (drd2-a) of Xenopus laevis (African clawed frog).